The sequence spans 600 residues: Elongation factor 4 (600 aa).

Residues 6 to 188 form the tr-type G domain; sequence KLIRNFSIIA…AVVERIPAPK (183 aa). Residues 18–23 and 135–138 contribute to the GTP site; these read DHGKST and NKID.

This sequence belongs to the TRAFAC class translation factor GTPase superfamily. Classic translation factor GTPase family. LepA subfamily.

It localises to the cell inner membrane. The enzyme catalyses GTP + H2O = GDP + phosphate + H(+). Required for accurate and efficient protein synthesis under certain stress conditions. May act as a fidelity factor of the translation reaction, by catalyzing a one-codon backward translocation of tRNAs on improperly translocated ribosomes. Back-translocation proceeds from a post-translocation (POST) complex to a pre-translocation (PRE) complex, thus giving elongation factor G a second chance to translocate the tRNAs correctly. Binds to ribosomes in a GTP-dependent manner. This Sorangium cellulosum (strain So ce56) (Polyangium cellulosum (strain So ce56)) protein is Elongation factor 4.